The sequence spans 507 residues: UDP-N-acetylmuramoyl-L-alanyl-D-glutamate--2,6-diaminopimelate ligase (507 aa).

S32 serves as a coordination point for UDP-N-acetyl-alpha-D-muramoyl-L-alanyl-D-glutamate. Residue 117–123 (GTNGKTT) coordinates ATP. UDP-N-acetyl-alpha-D-muramoyl-L-alanyl-D-glutamate-binding positions include 159–160 (TT), S186, Q192, and R194. K226 is modified (N6-carboxylysine). Residues R400, 424–427 (DNPR), G475, and E479 contribute to the meso-2,6-diaminopimelate site. Residues 424–427 (DNPR) carry the Meso-diaminopimelate recognition motif motif.

It belongs to the MurCDEF family. MurE subfamily. The cofactor is Mg(2+). In terms of processing, carboxylation is probably crucial for Mg(2+) binding and, consequently, for the gamma-phosphate positioning of ATP.

It is found in the cytoplasm. The enzyme catalyses UDP-N-acetyl-alpha-D-muramoyl-L-alanyl-D-glutamate + meso-2,6-diaminopimelate + ATP = UDP-N-acetyl-alpha-D-muramoyl-L-alanyl-gamma-D-glutamyl-meso-2,6-diaminopimelate + ADP + phosphate + H(+). Its pathway is cell wall biogenesis; peptidoglycan biosynthesis. In terms of biological role, catalyzes the addition of meso-diaminopimelic acid to the nucleotide precursor UDP-N-acetylmuramoyl-L-alanyl-D-glutamate (UMAG) in the biosynthesis of bacterial cell-wall peptidoglycan. The polypeptide is UDP-N-acetylmuramoyl-L-alanyl-D-glutamate--2,6-diaminopimelate ligase (Prochlorococcus marinus (strain MIT 9313)).